A 150-amino-acid polypeptide reads, in one-letter code: UPF0756 membrane protein Dd1591_2981 (150 aa).

The next 4 membrane-spanning stretches (helical) occupy residues 10 to 32 (ILLA…AILF), 51 to 71 (YGLS…IASG), 88 to 108 (LMAV…VVLM), and 127 to 147 (ALFR…SLLI).

The protein belongs to the UPF0756 family.

The protein resides in the cell membrane. In Dickeya chrysanthemi (strain Ech1591) (Dickeya zeae (strain Ech1591)), this protein is UPF0756 membrane protein Dd1591_2981.